Here is an 80-residue protein sequence, read N- to C-terminus: Large ribosomal subunit protein bL31B (80 aa).

The protein belongs to the bacterial ribosomal protein bL31 family. Type B subfamily. As to quaternary structure, part of the 50S ribosomal subunit.

This Exiguobacterium sp. (strain ATCC BAA-1283 / AT1b) protein is Large ribosomal subunit protein bL31B.